A 1722-amino-acid chain; its full sequence is Signal-induced proliferation-associated 1-like protein 2 (1722 aa).

Disordered stretches follow at residues 1-29 and 45-73; these read MSDPRPSQAEKHKLGRAASKFKDPSRAMQ and MGPATLNTSSLSEGGGGGGGPANGTPAVP. Over residues 57 to 66 the composition is skewed to gly residues; that stretch reads EGGGGGGGPA. S149, S380, and S384 each carry phosphoserine. A disordered region spans residues 362-404; that stretch reads ASAASQTPVPVGPAGGCESPLGSKEDLNAKENPDADEGDGKSN. A compositionally biased stretch (basic and acidic residues) spans 384–403; the sequence is SKEDLNAKENPDADEGDGKS. The region spanning 596 to 813 is the Rap-GAP domain; that stretch reads LLKLDEQGLS…RTRHEYLKDL (218 aa). Residues 951 to 1027 enclose the PDZ domain; that stretch reads EMTLRRNGLG…VKVVIIQPHE (77 aa). S1030 bears the Phosphoserine mark. 3 disordered regions span residues 1068 to 1172, 1197 to 1246, and 1328 to 1361; these read HRVP…DHED, ERAL…FGSG, and AADGSMGDLSEVSSHSSGSHRSGSPSTHCSKSTG. Low complexity-rich tracts occupy residues 1091 to 1103 and 1120 to 1131; these read LQCQPLLQQAQAA and SSPSNQSSSSDP. The span at 1197-1218 shows a compositional bias: basic and acidic residues; sequence ERALQKDGSCKDSPNKLSHIGD. Residues 1220–1237 are compositionally biased toward low complexity; it reads SCSSHSSSNTLSSNTSSN. A Phosphoserine modification is found at S1245. Residues 1328–1355 show a composition bias toward low complexity; that stretch reads AADGSMGDLSEVSSHSSGSHRSGSPSTH. Phosphoserine occurs at positions 1461, 1472, 1478, 1488, 1549, 1552, and 1591. Residues 1652–1712 adopt a coiled-coil conformation; the sequence is STLTGKVNQL…ATAQLRTFTE (61 aa).

The chain is Signal-induced proliferation-associated 1-like protein 2 (Sipa1l2) from Rattus norvegicus (Rat).